We begin with the raw amino-acid sequence, 541 residues long: Ascorbate transporter, chloroplastic (541 aa).

A chloroplast-targeting transit peptide spans 1 to 28 (MALGGLISNRNFGSFIGSGNGCQRLGKS). Helical transmembrane passes span 133–155 (VIVL…MSIA), 170–190 (VGLI…LGGI), 199–219 (VVLG…PIAA), 221–241 (LGLP…GVAM), 263–283 (LVYS…PMLI), 286–306 (FGWP…FLLW), 352–372 (VWAL…LLTW), 390–410 (LLCV…GWIA), 430–450 (IGFL…TPAM), 481–501 (AGVL…FGTA), and 515–535 (VFKV…LFAT).

It belongs to the major facilitator superfamily. Sodium/anion cotransporter (TC 2.A.1.14) family. In terms of tissue distribution, expressed in stems, developing siliques, leaf mesophyll cells and sepals of mature flowers. Not detected in roots. Detected in palisade tissue rather than spongy tissue from the leaves.

The protein localises to the plastid. It is found in the chloroplast inner membrane. Its activity is regulated as follows. Insensitive to dehydroascorbate, p-isoascorbate, inorganic phosphate, glutamate, ATP, p-aminohippuric acid or tetraethylammonium. Functionally, inorganic phosphate and probable anion transporter. Ascorbate transporter bridging the chloroplast envelope. Transports ascorbate from the cytosol into the chloroplast. Requires chloride ions and the presence of an electrochemical potential across the membrane for activity. This chain is Ascorbate transporter, chloroplastic (PHT4;4), found in Arabidopsis thaliana (Mouse-ear cress).